Reading from the N-terminus, the 362-residue chain is Adenosine deaminase (362 aa).

Zn(2+) contacts are provided by His-19 and His-21. Positions 21, 23, and 181 each coordinate substrate. Residue His-208 participates in Zn(2+) binding. Glu-211 acts as the Proton donor in catalysis. Residue Asp-300 coordinates Zn(2+).

The protein belongs to the metallo-dependent hydrolases superfamily. Adenosine and AMP deaminases family. Adenosine deaminase subfamily. Requires Zn(2+) as cofactor.

The catalysed reaction is adenosine + H2O + H(+) = inosine + NH4(+). It catalyses the reaction 2'-deoxyadenosine + H2O + H(+) = 2'-deoxyinosine + NH4(+). Functionally, catalyzes the hydrolytic deamination of adenosine and 2-deoxyadenosine. This is Adenosine deaminase from Mycolicibacterium vanbaalenii (strain DSM 7251 / JCM 13017 / BCRC 16820 / KCTC 9966 / NRRL B-24157 / PYR-1) (Mycobacterium vanbaalenii).